The following is a 434-amino-acid chain: Serine hydroxymethyltransferase 1 (434 aa).

(6S)-5,6,7,8-tetrahydrofolate contacts are provided by residues L136 and 140 to 142 (GHL). At K245 the chain carries N6-(pyridoxal phosphate)lysine.

Belongs to the SHMT family. As to quaternary structure, homodimer. Pyridoxal 5'-phosphate is required as a cofactor.

It is found in the cytoplasm. The catalysed reaction is (6R)-5,10-methylene-5,6,7,8-tetrahydrofolate + glycine + H2O = (6S)-5,6,7,8-tetrahydrofolate + L-serine. Its pathway is one-carbon metabolism; tetrahydrofolate interconversion. It functions in the pathway amino-acid biosynthesis; glycine biosynthesis; glycine from L-serine: step 1/1. Its function is as follows. Catalyzes the reversible interconversion of serine and glycine with tetrahydrofolate (THF) serving as the one-carbon carrier. This reaction serves as the major source of one-carbon groups required for the biosynthesis of purines, thymidylate, methionine, and other important biomolecules. Also exhibits THF-independent aldolase activity toward beta-hydroxyamino acids, producing glycine and aldehydes, via a retro-aldol mechanism. This Rhodospirillum rubrum (strain ATCC 11170 / ATH 1.1.1 / DSM 467 / LMG 4362 / NCIMB 8255 / S1) protein is Serine hydroxymethyltransferase 1.